The chain runs to 120 residues: Jacalin-related lectin 39 (120 aa).

One can recognise a Jacalin-type lectin domain in the interval 6-120; it reads SRDHADFVAH…KRTFDFGGFN (115 aa).

The protein belongs to the jacalin lectin family.

In Arabidopsis thaliana (Mouse-ear cress), this protein is Jacalin-related lectin 39 (JAL39).